Consider the following 101-residue polypeptide: Protein S100-A4 (101 aa).

Alanine 2 carries the post-translational modification N-acetylalanine. Position 7 is an N6-acetyllysine (lysine 7). 2 EF-hand domains span residues 12–47 and 50–85; these read MVST…SFLG and TDEA…IAMM. Positions 28 and 33 each coordinate Ca(2+). Lysine 35 is modified (N6-acetyllysine). The Ca(2+) site is built by aspartate 63, asparagine 65, aspartate 67, glutamate 69, and glutamate 74.

It belongs to the S-100 family. In terms of assembly, homodimer. Interacts with PPFIBP1 in a calcium-dependent mode. Interacts with PGLYRP1; this complex acts as a chemoattractant that promotes lymphocyte movement. Interacts with MYH9; this interaction increases cell motility. Interacts with Annexin 2/ANXA2. Interacts with TP53; this interaction promotes TP53 degradation. Interacts with CCR5. Interacts with FCGR3A; this interaction inhibits PKC-dependent phosphorylation of FCGR3A. In terms of tissue distribution, ubiquitously expressed.

It localises to the secreted. The protein resides in the nucleus. The protein localises to the cytoplasm. Calcium-binding protein that plays a role in various cellular processes including motility, angiogenesis, cell differentiation, apoptosis, and autophagy. Increases cell motility and invasiveness by interacting with non-muscle myosin heavy chain (NMMHC) IIA/MYH9. Mechanistically, promotes filament depolymerization and increases the amount of soluble myosin-IIA, resulting in the formation of stable protrusions facilitating chemotaxis. Also modulates the pro-apoptotic function of TP53 by binding to its C-terminal transactivation domain within the nucleus and reducing its protein levels. Within the extracellular space, stimulates cytokine production including granulocyte colony-stimulating factor and CCL24 from T-lymphocytes. In addition, stimulates T-lymphocyte chemotaxis by acting as a chemoattractant complex with PGLYRP1 that promotes lymphocyte migration via CCR5 and CXCR3 receptors. The chain is Protein S100-A4 (S100A4) from Homo sapiens (Human).